The chain runs to 158 residues: Transcription elongation factor GreB (158 aa).

It belongs to the GreA/GreB family. GreB subfamily.

Its function is as follows. Necessary for efficient RNA polymerase transcription elongation past template-encoded arresting sites. The arresting sites in DNA have the property of trapping a certain fraction of elongating RNA polymerases that pass through, resulting in locked ternary complexes. Cleavage of the nascent transcript by cleavage factors such as GreA or GreB allows the resumption of elongation from the new 3'terminus. GreB releases sequences of up to 9 nucleotides in length. The sequence is that of Transcription elongation factor GreB from Escherichia coli (strain K12).